Here is a 1018-residue protein sequence, read N- to C-terminus: Isoleucine--tRNA ligase (1018 aa).

Residues 43–53 (PYTTGRIHLGT) carry the 'HIGH' region motif. The 'KMSKS' region motif lies at 586–590 (KMSKS). Lys589 lines the ATP pocket.

It belongs to the class-I aminoacyl-tRNA synthetase family. IleS type 2 subfamily. Monomer. The cofactor is Zn(2+).

Its subcellular location is the cytoplasm. The catalysed reaction is tRNA(Ile) + L-isoleucine + ATP = L-isoleucyl-tRNA(Ile) + AMP + diphosphate. Functionally, catalyzes the attachment of isoleucine to tRNA(Ile). As IleRS can inadvertently accommodate and process structurally similar amino acids such as valine, to avoid such errors it has two additional distinct tRNA(Ile)-dependent editing activities. One activity is designated as 'pretransfer' editing and involves the hydrolysis of activated Val-AMP. The other activity is designated 'posttransfer' editing and involves deacylation of mischarged Val-tRNA(Ile). This chain is Isoleucine--tRNA ligase, found in Archaeoglobus fulgidus (strain ATCC 49558 / DSM 4304 / JCM 9628 / NBRC 100126 / VC-16).